The following is a 245-amino-acid chain: Probable ABC transporter ATP-binding protein p29 (245 aa).

One can recognise an ABC transporter domain in the interval 7 to 245; that stretch reads LSFEKVSIIY…KEQLYKIYDN (239 aa). 39–46 lines the ATP pocket; that stretch reads GKSGVGKS.

It belongs to the ABC transporter superfamily.

Part of a high-affinity transport system. This is Probable ABC transporter ATP-binding protein p29 (p29) from Mycoplasma genitalium (strain ATCC 33530 / DSM 19775 / NCTC 10195 / G37) (Mycoplasmoides genitalium).